The primary structure comprises 619 residues: Long-chain fatty acid transport protein 6 (619 aa).

Helical transmembrane passes span 22 to 42 and 119 to 139; these read LLFP…RYGI and VHVW…NSNL. Residue 221–232 participates in AMP binding; the sequence is YIFTSGTTGLPK.

It belongs to the ATP-dependent AMP-binding enzyme family.

Its subcellular location is the cell membrane. It localises to the sarcolemma. The enzyme catalyses a fatty acid(in) = a fatty acid(out). The catalysed reaction is hexadecanoate(out) = hexadecanoate(in). It catalyses the reaction (9Z,12Z)-octadecadienoate(out) = (9Z,12Z)-octadecadienoate(in). It carries out the reaction (9Z)-octadecenoate(out) = (9Z)-octadecenoate(in). The enzyme catalyses a very long-chain fatty acid + ATP + CoA = a very long-chain fatty acyl-CoA + AMP + diphosphate. The catalysed reaction is tetracosanoate + ATP + CoA = tetracosanoyl-CoA + AMP + diphosphate. It catalyses the reaction a long-chain fatty acid + ATP + CoA = a long-chain fatty acyl-CoA + AMP + diphosphate. It carries out the reaction (9Z)-octadecenoate + ATP + CoA = (9Z)-octadecenoyl-CoA + AMP + diphosphate. The enzyme catalyses (5Z,8Z,11Z,14Z)-eicosatetraenoate + ATP + CoA = (5Z,8Z,11Z,14Z)-eicosatetraenoyl-CoA + AMP + diphosphate. In terms of biological role, mediates the import of long-chain fatty acids (LCFA) into the cell by facilitating their transport at the plasma membrane. Also functions as an acyl-CoA ligase catalyzing the ATP-dependent formation of fatty acyl-CoA using LCFA and very-long-chain fatty acids (VLCFA) as substrates. Plays a pivotal role in regulating available LCFA substrates from exogenous sources in tissues undergoing high levels of beta-oxidation such as the heart. This Mus musculus (Mouse) protein is Long-chain fatty acid transport protein 6 (Slc27a6).